The sequence spans 589 residues: Aspartate--tRNA ligase (589 aa).

L-aspartate is bound at residue Glu-172. The aspartate stretch occupies residues 196 to 199 (QLFK). Arg-218 contacts L-aspartate. ATP is bound by residues 218-220 (RDE) and Gln-227. His-449 provides a ligand contact to L-aspartate. Glu-483 is a binding site for ATP. Arg-490 contributes to the L-aspartate binding site. Residue 535–538 (GLDR) participates in ATP binding.

It belongs to the class-II aminoacyl-tRNA synthetase family. Type 1 subfamily. As to quaternary structure, homodimer.

The protein resides in the cytoplasm. It carries out the reaction tRNA(Asp) + L-aspartate + ATP = L-aspartyl-tRNA(Asp) + AMP + diphosphate. In terms of biological role, catalyzes the attachment of L-aspartate to tRNA(Asp) in a two-step reaction: L-aspartate is first activated by ATP to form Asp-AMP and then transferred to the acceptor end of tRNA(Asp). This Haemophilus ducreyi (strain 35000HP / ATCC 700724) protein is Aspartate--tRNA ligase.